Here is a 312-residue protein sequence, read N- to C-terminus: Very-long-chain 3-oxoacyl-CoA reductase (312 aa).

Residues 4 to 24 traverse the membrane as a helical segment; it reads ALPAAGFLYWVGAGTVAYLAL. 50–79 provides a ligand contact to NADP(+); that stretch reads GEWAVVTGSTDGIGKSYAEELAKHGMKVVL. Helical transmembrane passes span 182–202 and 271–291; these read GAIL…LTIY and GYLI…WIYL. S189 contributes to the substrate binding site. The active-site Proton acceptor is Y202. A Di-lysine motif motif is present at residues 308 to 312; that stretch reads KTKKN.

This sequence belongs to the short-chain dehydrogenases/reductases (SDR) family. 17-beta-HSD 3 subfamily. In terms of assembly, interacts with ELOVL1 and LASS2. As to expression, expressed in most tissues tested. Highly expressed in the ovary and mammary. Expressed in platelets.

It is found in the endoplasmic reticulum membrane. The catalysed reaction is a very-long-chain (3R)-3-hydroxyacyl-CoA + NADP(+) = a very-long-chain 3-oxoacyl-CoA + NADPH + H(+). It catalyses the reaction 17beta-estradiol + NAD(+) = estrone + NADH + H(+). It carries out the reaction 17beta-estradiol + NADP(+) = estrone + NADPH + H(+). The enzyme catalyses 3-oxooctadecanoyl-CoA + NADPH + H(+) = (3R)-hydroxyoctadecanoyl-CoA + NADP(+). The catalysed reaction is (7Z,10Z,13Z,16Z)-3-oxodocosatetraenoyl-CoA + NADPH + H(+) = (3R)-hydroxy-(7Z,10Z,13Z,16Z)-docosatetraenoyl-CoA + NADP(+). It catalyses the reaction 3-oxo-(7Z,10Z,13Z,16Z,19Z)-docosapentaenoyl-CoA + NADPH + H(+) = (3R)-hydroxy-(7Z,10Z,13Z,16Z,19Z)-docosapentaenoyl-CoA + NADP(+). It carries out the reaction (8Z,11Z,14Z)-3-oxoeicosatrienoyl-CoA + NADPH + H(+) = (3R)-hydroxy-(8Z,11Z,14Z)-eicosatrienoyl-CoA + NADP(+). Its pathway is lipid metabolism; fatty acid biosynthesis. The protein operates within steroid biosynthesis; estrogen biosynthesis. In terms of biological role, catalyzes the second of the four reactions of the long-chain fatty acids elongation cycle. This endoplasmic reticulum-bound enzymatic process, allows the addition of two carbons to the chain of long- and very long-chain fatty acids/VLCFAs per cycle. This enzyme has a 3-ketoacyl-CoA reductase activity, reducing 3-ketoacyl-CoA to 3-hydroxyacyl-CoA, within each cycle of fatty acid elongation. Thereby, it may participate in the production of VLCFAs of different chain lengths that are involved in multiple biological processes as precursors of membrane lipids and lipid mediators. May also catalyze the transformation of estrone (E1) into estradiol (E2) and play a role in estrogen formation. The sequence is that of Very-long-chain 3-oxoacyl-CoA reductase from Homo sapiens (Human).